An 81-amino-acid polypeptide reads, in one-letter code: U-poneritoxin(01)-Om2a (81 aa).

Residues 1-25 form the signal peptide; the sequence is MKPSGITFAFLVVFMMAIMYNSVQA. Positions 26–47 are excised as a propeptide; sequence AAIADADADAEAKAFADAFAEA.

The protein belongs to the formicidae venom precursor-01 superfamily. Truncated sequences of this peptide have also been found in the venom. It is possible they have been cleaved in the venom. Expressed by the venom gland.

The protein resides in the secreted. In terms of biological role, cationic amphipathic alpha-helical peptide with antimicrobial activities against E.coli (MIC=6.2 uM), S.aureus (MIC=6.2 uM), and S.cerevisiae (MIC=50 uM). Also shows histamine-releasing activity (30.1% at 10 uM) and a weak hemolytic activity (10.4% at 50 uM). In Odontomachus monticola (Trap-jaw ant), this protein is U-poneritoxin(01)-Om2a.